Reading from the N-terminus, the 244-residue chain is Cobalt transport protein CbiM (244 aa).

Residues 1-28 form the signal peptide; the sequence is MKLLKNKKVTFVALLAILAVLSTQSVSA. The next 6 membrane-spanning stretches (helical) occupy residues 36 to 56, 71 to 91, 108 to 128, 135 to 155, 166 to 186, and 208 to 228; these read LPLFWCIFWFAVFLPFFVVGL, TMLALSGAFIFILSSLKIPSV, FGPSVISVLGTICLLFQALLL, TLGANAFSMAVVGPFVGYFVY, PVSIFICAVIADLATYATTSI, and GVFLTTQIPIAIVEGLLTVVL.

Belongs to the CbiM family. In terms of assembly, forms an energy-coupling factor (ECF) transporter complex composed of an ATP-binding protein (A component, CbiO), a transmembrane protein (T component, CbiQ) and 2 possible substrate-capture proteins (S components, CbiM and CbiN) of unknown stoichimetry.

Its subcellular location is the cell membrane. The protein operates within cofactor biosynthesis; adenosylcobalamin biosynthesis. Functionally, part of the energy-coupling factor (ECF) transporter complex CbiMNOQ involved in cobalt import. The polypeptide is Cobalt transport protein CbiM (Streptococcus sanguinis (strain SK36)).